The sequence spans 272 residues: Cell division protein FtsQ (272 aa).

Residues 1 to 43 (MEYNPPNTRERIVARRQRMRRNSTEPVVPGWRWRLREGLRSGR) lie on the Cytoplasmic side of the membrane. The chain crosses the membrane as a helical span at residues 44–64 (IVSGIVFVISCFALFYVLFSS). Residues 65-272 (RFRVQTVEVV…FYQYRPDGSS (208 aa)) lie on the Extracellular side of the membrane. The POTRA domain occupies 66 to 133 (FRVQTVEVVG…DRARIVIVER (68 aa)).

Belongs to the FtsQ/DivIB family. FtsQ subfamily.

It localises to the cell membrane. Essential cell division protein. The protein is Cell division protein FtsQ of Chloroflexus aurantiacus (strain ATCC 29366 / DSM 635 / J-10-fl).